The following is a 288-amino-acid chain: Stage IV sporulation protein FB (288 aa).

Over 1 to 10 the chain is Mother cell cytoplasmic; the sequence is MNKWLDLILK. The helical transmembrane segment at 11–30 threads the bilayer; that stretch reads IHVHPFLWIIAALGLLTGHM. Position 31 (Lys-31) is a topological domain, forespore intermembrane space. The helical transmembrane segment at 32-56 threads the bilayer; it reads ALLCLLLIVLIHELGHAALAVFFSW. His-43 contributes to the Zn(2+) binding site. Glu-44 is a catalytic residue. His-47 contacts Zn(2+). At 57–83 the chain is on the mother cell cytoplasmic side; it reads RIKRVFLLPFGGTVEVEEHGNRPLKEE. The helical transmembrane segment at 84–105 threads the bilayer; sequence FAVIIAGPLQHIWLQFAAWMLA. Residues 106-126 lie on the Forespore intermembrane space side of the membrane; sequence EVSVIHQHTFELFTFYNLSIL. A helical membrane pass occupies residues 127-146; it reads FVNLLPIWPLDGGKLLFLLF. Asp-137 provides a ligand contact to Zn(2+). Over 147–161 the chain is Mother cell cytoplasmic; the sequence is SKQLPFQKAHRLNLK. The chain crosses the membrane as a helical span at residues 162–178; it reads TSLCFCLLLGCWVLFVI. Position 179 (Pro-179) is a topological domain, forespore intermembrane space. A helical membrane pass occupies residues 180–199; that stretch reads LQISAWVLFVFLAVSLFEEY. The Mother cell cytoplasmic portion of the chain corresponds to 200–288; it reads RQRHYIHVRF…SSMEELLLPY (89 aa).

This sequence belongs to the peptidase M50B family. Forms a complex with SpoIVFA and BofA localized in the mother-cell membrane surrounding the forespore. Zn(2+) is required as a cofactor.

The protein resides in the forespore outer membrane. Implicated in the coupling of mother cell to forespore gene expression. Required for spore formation. Processes the pro-sigma K factor. The polypeptide is Stage IV sporulation protein FB (spoIVFB) (Bacillus subtilis (strain 168)).